A 156-amino-acid polypeptide reads, in one-letter code: MRKTIMKYLPALAGIIFTAGWFLWIDGHVYENTNNKNADFDGPHIQWIYYLPGIFATLGMVMANIVDLSALNSNSLLFDGGATKVRVWLFISFAISFGCIGAALWIMVAVFLPPHNTNDAAQWPGIAITLQTSLIFLSSLLLVFKKVRQDDEYDQF.

Transmembrane regions (helical) follow at residues 5-25, 45-65, 87-107, and 124-144; these read IMKY…FLWI, IQWI…MANI, VWLF…LWIM, and PGIA…LLVF.

This sequence belongs to the UPF0220 family.

The protein resides in the membrane. The protein is Transmembrane protein 50 homolog (tmem50) of Dictyostelium discoideum (Social amoeba).